Reading from the N-terminus, the 106-residue chain is Iron-sulfur cluster assembly protein CyaY (106 aa).

This sequence belongs to the frataxin family.

Its function is as follows. Involved in iron-sulfur (Fe-S) cluster assembly. May act as a regulator of Fe-S biogenesis. This chain is Iron-sulfur cluster assembly protein CyaY, found in Colwellia psychrerythraea (strain 34H / ATCC BAA-681) (Vibrio psychroerythus).